A 158-amino-acid chain; its full sequence is Arginine repressor (158 aa).

It belongs to the ArgR family.

The protein localises to the cytoplasm. Its pathway is amino-acid biosynthesis; L-arginine biosynthesis [regulation]. Regulates arginine biosynthesis genes. The protein is Arginine repressor of Phocaeicola vulgatus (strain ATCC 8482 / DSM 1447 / JCM 5826 / CCUG 4940 / NBRC 14291 / NCTC 11154) (Bacteroides vulgatus).